Reading from the N-terminus, the 356-residue chain is Protein-glutamate methylesterase/protein-glutamine glutaminase 2 (356 aa).

The Response regulatory domain maps to 6–123; that stretch reads KVLIVDDSAL…KQFLEESSIR (118 aa). Position 57 is a 4-aspartylphosphate (Asp57). Residues 165-356 enclose the CheB-type methylesterase domain; the sequence is VQRTEKVVVV…AAAIVKACNS (192 aa). Active-site residues include Ser177, His203, and Asp299.

It belongs to the CheB family. Post-translationally, phosphorylated by CheA. Phosphorylation of the N-terminal regulatory domain activates the methylesterase activity.

The protein resides in the cytoplasm. The enzyme catalyses [protein]-L-glutamate 5-O-methyl ester + H2O = L-glutamyl-[protein] + methanol + H(+). The catalysed reaction is L-glutaminyl-[protein] + H2O = L-glutamyl-[protein] + NH4(+). Functionally, involved in chemotaxis. Part of a chemotaxis signal transduction system that modulates chemotaxis in response to various stimuli. Catalyzes the demethylation of specific methylglutamate residues introduced into the chemoreceptors (methyl-accepting chemotaxis proteins or MCP) by CheR. Also mediates the irreversible deamidation of specific glutamine residues to glutamic acid. The polypeptide is Protein-glutamate methylesterase/protein-glutamine glutaminase 2 (Oleidesulfovibrio alaskensis (strain ATCC BAA-1058 / DSM 17464 / G20) (Desulfovibrio alaskensis)).